The sequence spans 104 residues: DET1- and DDB1-associated protein 1 (104 aa).

Over residues 67-77 (KKNAAKKREQE) the composition is skewed to basic and acidic residues. Residues 67–104 (KKNAAKKREQEQAEGEGGSPAPPRKIARTDSQEMNEDS) are disordered.

It belongs to the DDA1 family. As to quaternary structure, component of numerous DCX (DDB1-CUL4-X-box) E3 ubiquitin-protein ligase complexes which consist of a core of DDB1, cullin-4 (CUL4A or CUL4B), DDA1 and RBX1.

Its pathway is protein modification; protein ubiquitination. Functionally, functions as a component of numerous distinct DCX (DDB1-CUL4-X-box) E3 ubiquitin-protein ligase complexes which mediate the ubiquitination and subsequent proteasomal degradation of target proteins. In the DCX complexes, acts as a scaffolding subunit required to stabilize the complex. In Danio rerio (Zebrafish), this protein is DET1- and DDB1-associated protein 1.